We begin with the raw amino-acid sequence, 633 residues long: Glutamyl-tRNA(Gln) amidotransferase subunit E (633 aa).

The protein belongs to the GatB/GatE family. GatE subfamily. As to quaternary structure, heterodimer of GatD and GatE.

The enzyme catalyses L-glutamyl-tRNA(Gln) + L-glutamine + ATP + H2O = L-glutaminyl-tRNA(Gln) + L-glutamate + ADP + phosphate + H(+). In terms of biological role, allows the formation of correctly charged Gln-tRNA(Gln) through the transamidation of misacylated Glu-tRNA(Gln) in organisms which lack glutaminyl-tRNA synthetase. The reaction takes place in the presence of glutamine and ATP through an activated gamma-phospho-Glu-tRNA(Gln). The GatDE system is specific for glutamate and does not act on aspartate. In Saccharolobus islandicus (strain L.S.2.15 / Lassen #1) (Sulfolobus islandicus), this protein is Glutamyl-tRNA(Gln) amidotransferase subunit E.